Consider the following 272-residue polypeptide: Phosphoglycolate phosphatase (272 aa).

The active-site Nucleophile is the D19. Mg(2+) contacts are provided by D19, D21, and D182.

The protein belongs to the HAD-like hydrolase superfamily. CbbY/CbbZ/Gph/YieH family. The cofactor is Mg(2+).

It catalyses the reaction 2-phosphoglycolate + H2O = glycolate + phosphate. Its pathway is organic acid metabolism; glycolate biosynthesis; glycolate from 2-phosphoglycolate: step 1/1. Specifically catalyzes the dephosphorylation of 2-phosphoglycolate. Is involved in the dissimilation of the intracellular 2-phosphoglycolate formed during the DNA repair of 3'-phosphoglycolate ends, a major class of DNA lesions induced by oxidative stress. The chain is Phosphoglycolate phosphatase from Pseudomonas savastanoi pv. phaseolicola (strain 1448A / Race 6) (Pseudomonas syringae pv. phaseolicola (strain 1448A / Race 6)).